The chain runs to 427 residues: Sperm-associated antigen 1A (427 aa).

The segment at 46 to 113 (QKKGPGYREG…GPGSAGESCN (68 aa)) is disordered. 6 TPR repeats span residues 125–158 (LARL…CIEA), 167–200 (CVLY…HPFS), 202–234 (KPLL…DISV), 302–335 (FTIL…KPNE), 336–369 (CAIY…EPKN), and 371–403 (KAFY…DPNV).

It localises to the cytoplasm. The protein localises to the dynein axonemal particle. Its function is as follows. May play a role in the cytoplasmic assembly and/or trafficking of the axonemal dynein arms. The polypeptide is Sperm-associated antigen 1A (spag1a) (Danio rerio (Zebrafish)).